A 620-amino-acid chain; its full sequence is 1-deoxy-D-xylulose-5-phosphate synthase (620 aa).

Thiamine diphosphate-binding positions include H80 and 121–123 (GHS). D152 contacts Mg(2+). Thiamine diphosphate contacts are provided by residues 153 to 154 (GA), N181, Y288, and E370. N181 contacts Mg(2+).

Belongs to the transketolase family. DXPS subfamily. Homodimer. Requires Mg(2+) as cofactor. Thiamine diphosphate serves as cofactor.

It catalyses the reaction D-glyceraldehyde 3-phosphate + pyruvate + H(+) = 1-deoxy-D-xylulose 5-phosphate + CO2. The protein operates within metabolic intermediate biosynthesis; 1-deoxy-D-xylulose 5-phosphate biosynthesis; 1-deoxy-D-xylulose 5-phosphate from D-glyceraldehyde 3-phosphate and pyruvate: step 1/1. Functionally, catalyzes the acyloin condensation reaction between C atoms 2 and 3 of pyruvate and glyceraldehyde 3-phosphate to yield 1-deoxy-D-xylulose-5-phosphate (DXP). In Citrobacter koseri (strain ATCC BAA-895 / CDC 4225-83 / SGSC4696), this protein is 1-deoxy-D-xylulose-5-phosphate synthase.